Here is a 286-residue protein sequence, read N- to C-terminus: ATP synthase gamma chain (286 aa).

Belongs to the ATPase gamma chain family. As to quaternary structure, F-type ATPases have 2 components, CF(1) - the catalytic core - and CF(0) - the membrane proton channel. CF(1) has five subunits: alpha(3), beta(3), gamma(1), delta(1), epsilon(1). CF(0) has three main subunits: a, b and c.

It localises to the cell inner membrane. Functionally, produces ATP from ADP in the presence of a proton gradient across the membrane. The gamma chain is believed to be important in regulating ATPase activity and the flow of protons through the CF(0) complex. The chain is ATP synthase gamma chain from Shewanella sediminis (strain HAW-EB3).